The primary structure comprises 59 residues: Photosystem II reaction center protein K (59 aa).

Residues 1-22 (MLNIFSLICLSSALHSSSFFFA) constitute a propeptide that is removed on maturation. A helical transmembrane segment spans residues 38 to 58 (MPVIPVLFFLLALVWQAAVSF).

Belongs to the PsbK family. PSII is composed of 1 copy each of membrane proteins PsbA, PsbB, PsbC, PsbD, PsbE, PsbF, PsbH, PsbI, PsbJ, PsbK, PsbL, PsbM, PsbT, PsbX, PsbY, PsbZ, Psb30/Ycf12, at least 3 peripheral proteins of the oxygen-evolving complex and a large number of cofactors. It forms dimeric complexes.

The protein resides in the plastid. It localises to the chloroplast thylakoid membrane. In terms of biological role, one of the components of the core complex of photosystem II (PSII). PSII is a light-driven water:plastoquinone oxidoreductase that uses light energy to abstract electrons from H(2)O, generating O(2) and a proton gradient subsequently used for ATP formation. It consists of a core antenna complex that captures photons, and an electron transfer chain that converts photonic excitation into a charge separation. This is Photosystem II reaction center protein K from Piper cenocladum (Ant piper).